Reading from the N-terminus, the 134-residue chain is UPF0412 protein YaaI (134 aa).

Positions 1-23 (MKSVFTLSASLAISLMLCCTAQA) are cleaved as a signal peptide.

It belongs to the UPF0412 family.

This is UPF0412 protein YaaI from Escherichia coli O17:K52:H18 (strain UMN026 / ExPEC).